The chain runs to 943 residues: 2-oxoglutarate dehydrogenase E1 component (943 aa).

Belongs to the alpha-ketoglutarate dehydrogenase family. In terms of assembly, homodimer. Part of the 2-oxoglutarate dehydrogenase (OGDH) complex composed of E1 (2-oxoglutarate dehydrogenase), E2 (dihydrolipoamide succinyltransferase) and E3 (dihydrolipoamide dehydrogenase); the complex contains multiple copies of the three enzymatic components (E1, E2 and E3). Thiamine diphosphate serves as cofactor.

The catalysed reaction is N(6)-[(R)-lipoyl]-L-lysyl-[protein] + 2-oxoglutarate + H(+) = N(6)-[(R)-S(8)-succinyldihydrolipoyl]-L-lysyl-[protein] + CO2. In terms of biological role, E1 component of the 2-oxoglutarate dehydrogenase (OGDH) complex which catalyzes the decarboxylation of 2-oxoglutarate, the first step in the conversion of 2-oxoglutarate to succinyl-CoA and CO(2). This is 2-oxoglutarate dehydrogenase E1 component from Shouchella clausii (strain KSM-K16) (Alkalihalobacillus clausii).